Reading from the N-terminus, the 217-residue chain is MEEEEHEVYGGEIPEVGDTDVPDPDIDMSAADEDAVTELAEMKRRLKEMEEEAAALREMQAKVEKEMGATQDPASMAANQEGKEEVDARSVYVGNVDYACTPEEVQLHFQTCGTVNRVTILMDKFGQPKGFAYVEFVEVEAVQEALQLNESELHGRQLKVSPKRTNVPGMKQYHPGRFNPSMGYRFRRPFVPPYFYSPYGYGKAPRFRRPMRYMPYQ.

The tract at residues 1–28 (MEEEEHEVYGGEIPEVGDTDVPDPDIDM) is disordered. Acidic residues predominate over residues 15–28 (EVGDTDVPDPDIDM). A coiled-coil region spans residues 30–71 (AADEDAVTELAEMKRRLKEMEEEAAALREMQAKVEKEMGATQ). Residues 75–216 (SMAANQEGKE…FRRPMRYMPY (142 aa)) form a necessary for homooligomerization region. In terms of domain architecture, RRM spans 89–165 (RSVYVGNVDY…RQLKVSPKRT (77 aa)). Positions 162–169 (PKRTNVPG) match the Nuclear localization signal motif.

In terms of assembly, monomer and homooligomer. Binds RNA as a monomer and oligomerizes when bound to poly(A). Forms a complex with cleavage and polyadenylation specificity factor (CPSF) subunits PAPS4, PABN1, PABN2, CSTF50 and FIPS5. Interacts with CSP3.

The protein resides in the nucleus speckle. Its subcellular location is the cytoplasm. Involved in the 3'-end formation of mRNA precursors (pre-mRNA) by the addition of a poly(A) tail of 200-250 nt to the upstream cleavage product. Stimulates poly(A) polymerase (PAPOLA) conferring processivity on the poly(A) tail elongation reaction and also controls the poly(A) tail length. Increases the affinity of poly(A) polymerase for RNA. Binds to poly(A) and to poly(G) with high affinity. May protect the poly(A) tail from degradation. The sequence is that of Polyadenylate-binding protein 3 from Arabidopsis thaliana (Mouse-ear cress).